The chain runs to 255 residues: Thiazole synthase (255 aa).

Lys96 acts as the Schiff-base intermediate with DXP in catalysis. 1-deoxy-D-xylulose 5-phosphate is bound by residues Gly157, 183 to 184 (AG), and 205 to 206 (NT).

It belongs to the ThiG family. Homotetramer. Forms heterodimers with either ThiH or ThiS.

It localises to the cytoplasm. It catalyses the reaction [ThiS sulfur-carrier protein]-C-terminal-Gly-aminoethanethioate + 2-iminoacetate + 1-deoxy-D-xylulose 5-phosphate = [ThiS sulfur-carrier protein]-C-terminal Gly-Gly + 2-[(2R,5Z)-2-carboxy-4-methylthiazol-5(2H)-ylidene]ethyl phosphate + 2 H2O + H(+). It participates in cofactor biosynthesis; thiamine diphosphate biosynthesis. Catalyzes the rearrangement of 1-deoxy-D-xylulose 5-phosphate (DXP) to produce the thiazole phosphate moiety of thiamine. Sulfur is provided by the thiocarboxylate moiety of the carrier protein ThiS. In vitro, sulfur can be provided by H(2)S. The protein is Thiazole synthase of Heliobacterium modesticaldum (strain ATCC 51547 / Ice1).